The chain runs to 309 residues: MTFQVECVESRTEADQGQYGRFSIEPLARGQGTTVGNALRRVLLSNLEGTAVTAVRIGGVNHEFATIPGVREDVLDILLNVRELVVHAHSPQPQIGRLRVVGPATVTAADVDFGPEVEVINPNHYIASLSEGATLEMELKVEWGTGYRAIDRSHDETTALDFLQLDAVFMPVRRVNYSVEDARVGESTAIDRLVLEVWTNGSLSPQEALSQAASCLVALFEPLKNVSVGSTHTADPEPTPESQTPIEDLQLSVRAYNCLKRAQVNSVADLLSYTYEDLLEIKNFGQKSAEEVVEALERIGIKLQESKVS.

Residues 1 to 227 are alpha N-terminal domain (alpha-NTD); the sequence is MTFQVECVES…ALFEPLKNVS (227 aa). Residues 237-309 form an alpha C-terminal domain (alpha-CTD) region; sequence EPTPESQTPI…GIKLQESKVS (73 aa).

The protein belongs to the RNA polymerase alpha chain family. In terms of assembly, in cyanobacteria the RNAP catalytic core is composed of 2 alpha, 1 beta, 1 beta', 1 gamma and 1 omega subunit. When a sigma factor is associated with the core the holoenzyme is formed, which can initiate transcription.

The enzyme catalyses RNA(n) + a ribonucleoside 5'-triphosphate = RNA(n+1) + diphosphate. Its function is as follows. DNA-dependent RNA polymerase catalyzes the transcription of DNA into RNA using the four ribonucleoside triphosphates as substrates. The chain is DNA-directed RNA polymerase subunit alpha from Synechococcus elongatus (strain ATCC 33912 / PCC 7942 / FACHB-805) (Anacystis nidulans R2).